Here is a 368-residue protein sequence, read N- to C-terminus: tRNA-specific 2-thiouridylase MnmA (368 aa).

Residues glycine 11–serine 18 and methionine 37 contribute to the ATP site. An interaction with target base in tRNA region spans residues asparagine 97–aspartate 99. Cysteine 102 acts as the Nucleophile in catalysis. Cysteines 102 and 199 form a disulfide. Glycine 127 contributes to the ATP binding site. An interaction with tRNA region spans residues lysine 149–glutamine 151. Cysteine 199 acts as the Cysteine persulfide intermediate in catalysis. The segment at arginine 311–tyrosine 312 is interaction with tRNA.

This sequence belongs to the MnmA/TRMU family. Interacts with TusE.

It is found in the cytoplasm. It catalyses the reaction S-sulfanyl-L-cysteinyl-[protein] + uridine(34) in tRNA + AH2 + ATP = 2-thiouridine(34) in tRNA + L-cysteinyl-[protein] + A + AMP + diphosphate + H(+). In terms of biological role, catalyzes the 2-thiolation of uridine at the wobble position (U34) of tRNA(Lys), tRNA(Glu) and tRNA(Gln), leading to the formation of s(2)U34, the first step of tRNA-mnm(5)s(2)U34 synthesis. Sulfur is provided by IscS, via a sulfur-relay system. Binds ATP and its substrate tRNAs. The sequence is that of tRNA-specific 2-thiouridylase MnmA from Escherichia coli O157:H7.